Consider the following 363-residue polypeptide: MLDLDLRRRQGEFRLDVRLSAGPGVTALYGRSGSGKTSVINMVAGLSRPDEGSISVDGRVLFDSRSGIDLPPEARRLGYVFQEHRLFPHLSVRGNLEFGQKLLPSAERTQSLDKVVELLGIESLLDRRPAKLSGGEKQRVAIGRALLASPRILLMDEPLAALDPARKAEVLPFIAQLARRFSVPILYVSHSMDEVLRLADTLALMDGGKVAASGPLESLMGDPGLRPLTGRYEAGAVIGAVVSSHDSGFGISRLAFDGGTLIVGRSELPVGAKVRLRIHARDVAIAIEPPDRVSIRNVLPAIVVSVAPADSFLVDVILACGPTRFWVQITTLAQAQLNLVPGMRVHALIKALTIARGDVASVD.

The region spanning 1–232 (MLDLDLRRRQ…PGLRPLTGRY (232 aa)) is the ABC transporter domain. Position 30 to 37 (30 to 37 (GRSGSGKT)) interacts with ATP. Positions 292 to 358 (RVSIRNVLPA…IKALTIARGD (67 aa)) constitute a Mop domain.

Belongs to the ABC transporter superfamily. Molybdate importer (TC 3.A.1.8) family. As to quaternary structure, the complex is composed of two ATP-binding proteins (ModC), two transmembrane proteins (ModB) and a solute-binding protein (ModA).

The protein resides in the cell inner membrane. The enzyme catalyses molybdate(out) + ATP + H2O = molybdate(in) + ADP + phosphate + H(+). Functionally, part of the ABC transporter complex ModABC involved in molybdenum import. Responsible for energy coupling to the transport system. The chain is Molybdenum import ATP-binding protein ModC from Paramagnetospirillum magneticum (strain ATCC 700264 / AMB-1) (Magnetospirillum magneticum).